We begin with the raw amino-acid sequence, 2812 residues long: MAARAQNNGEMDTRIAVIGMSAILPCGTTVRESWETIRAGIDCLSDLPEDRVDVTAYFDPVKTTKDKIYCKRGGFIPEYDFDAREFGLNMFQMEDSDANQTISLLKVKEALQDAGIDALSKEKKNIGCVLGIGGGQKSSHEFYSRLNYVVVDKVLRKMGMPEEDIKVAVEKYKANFPEWRLDSFPGFLGNVTAGRCTNTFNLDGMNCVVDAACASSLIAVKVAIDELLHGDCDMMVTGATCTDNSIGMYMAFSKTPVFSTDPSVRAYDEKTKGMLIGEGSAMLVLKRYADAVRDGDDIHAVIRGCASSSDGKAAGIYTPTISGQEEALRRAYNRACVDPATVTLVEGHGTGTPVGDRIELTALRNLFDKAYGEGNHEKVAVGSIKSTIGHLKAVAGLAGMIKVIMALKHKTLPGTINVDNPPALYDGTPINESSLYINTMNRPWFPPPGVPRRAGISSFGFGGANYHAVLEEAEPEHASAYRLNKRPQPVLMLANSAQELASLCRAQLAAFEAALEEDKAVKNVAYIKCVEFCEEFKFPGSVPAGSARLGFLVKDAEDATATLRAICAQFAKDVAKEAWRLPREGVSFRAKGIATEGAVAALFSGQGAQYTHMFSEVAMNWPQFRQSISAMDAAQCKVAGEDKDFERVSQVLYPRKPYEREQEQDHKKISLTAYSQPSTLACALGAFEIFKDSGFTPDFAAGHSLGEFAALYAAGCVDRDELYELVCRRARIMGGKDAPATPKGCMAAVIGPDAEKIQIRSPNVWLGNSNSPSQTVITGSVEGIQAETAILQKEGFRVVPLACESAFHSPQMENASAAFKDVISKTSFRAPKAETKLFSNVSGETYPRDARDMLTQHMTSSVKFLTQVRNMHQAGARIFVEFGPKQVLSKLVSETLKDDPSIVTVSVNPASGKDSDIQLRDAAVQLVVAGVNLQGFDKWDAPDATRMKAIKKKRTTLRLSAATYVSDKTKKVREAAMNDGRCISYIKNGAAAPAPAPVVDEEAKREAARLQKQLEDAQRQLDEAKRAADEANQKLAAAKEEAKSAAASSKTSAVDTAVVEKHRAILKSMLAELDGYGSVDASALQQQPAAAAPAPAAAAPAPAAPAPAAAVDSALLARAESVVMEVLATKTGYETDMIEADMELETELGIDSIKRVEILSEVQAQLNVEAKDVDALSRTRTVGEVVDAMKAEIAGSAAPAPAAAAPAAAAPAPAAAAAPAAPAAGVDSALLERAETVVMEVLAAKTGYETDMIEADMELETELGIDSIKRVEILSEVQAQLNVEAKDVDALSRTRTVGEVVNAMKAEISGGSAPAPAAAAPAAAAPAPAAAPAAGVDSALLAKAETVVMEVLAAKTGYETDMIEADMELETELGIDSIKRVEILSEVQAQLNVEAKDVDALSRTRTVGEVVNAMKAEISGGSAPAPAAAAPAPAAPAPAAAAPAPAAGVDSALLAKAETVVMEVLAAKTGYETDMIEADMELETELGIDSIKRVEILSEVQAQLNVEAKDVDALSRTRTVGEVVDAMKAEISGGSAPAPAAAAPAPAAPAPAAAAPAPAAGVDSALLAKAETVVMEVLAAKTGYETDMIEADMELETELGIDSIKRVEILSEVQAQLNVEAKDVDALSRTRTVGEVVDAMKAEISGGSAPAPAAAAPAPAAAAPAPAAAAPAAGVDSALLAKAETVVMEVLAAKTGYETDMIESDMELETELGIDSIKRVEILSEVQAQLNVEAKDVDALSRTRTVGEVVDAMKAEISGGSAPAAAAPAPAAAAPAPAAAAPAAGVDSALLAKAETVVMEVLAAKTGYETDMIESDMELETELGIDSIKRVEILSEVQAQLNVEAKDVDALSRTRTVGEVVDAMKAEISGGSAPAAAAPAPAAAAPAPAAAAPAAGVDSALLAKAETVVMEVLAAKTGYETDMIEADMELETELGIDSIKRVEILSEVQAQLNVEAKDVDALSRTRTVGEVVDAMKAEISGGSASASAPAPAATAAAVKIDSVHGADCDDLSLMHAKVVDIRRPDELLLERPENRPVLVVDDGSELTLALVRVLGACAVVLTFDGLQLAQRAGAAAIRHVLAKDLSAESAEKAVQEAEQRFGKLGGLISQQADRFEPASILGFTLMLAKFAKASLCTSVPGGRPAFIGVARLDGRLGFTSQDGADALTRAQRGAIFGLCKTIGLEWSDSDVFSRGVDVAQNMHPEDAAVAIVREMACADIRVREVGIGANQQRCTIRAVKLEPGAPQRQISKDDVLVVSGGARGITPLCIREITRQISGGKYILLGRSKVSSSEPTWCAGISDDKAVQKAATQELKRAFAAGEGPKPTPRAITKLVGSVLGAREVRSSVAAIEALGGKAIYSSCDVNSAADVAKAVREAEAQLGGRVSGIVHASGVLRDRLIEKKLPDEFDAVYGTKVAGLENLLNTVDRANLKHMVLFSSLAGFHGNVGQSDYAMANEALNKIGLELSNSGVSVKSICFGPWDGGMVTPQLKKQFQEMGVQIIPREGGADTVARIVLGSSPAEILVGNWRTPTKKIGTETITLHRKISAKSNAFLDDHVIQGRRVLPMTLAIGSLAETCLGLFPGYSLWAIDDAQLFKGVTVDGDVNCEIALTPSEGQAGRVNVQATLKTFSSGKLVPAYRAVVVLSSQGAPPANATMQPPSLSADPAAQSAVYDGKTLFHGPAFRGIDEVLSCSKSQLVAKCRAVPGSDAARAEFATDTDAHDPFVNDLAFQAMLVWVRRTLGQAALPNSIQRIVQHRPVPQDKPFYITLRSNQAGGHSQHKHALQFHNEQGDLFIDVQASVIATDSLAF.

A Ketosynthase family 3 (KS3) domain is found at 12-472; it reads DTRIAVIGMS…GANYHAVLEE (461 aa). Residues Cys-213, His-348, and His-390 each act as for beta-ketoacyl synthase activity in the active site. One can recognise a Malonyl-CoA:ACP transacylase (MAT) domain in the interval 602 to 913; the sequence is LFSGQGAQYT…TVSVNPASGK (312 aa). A coiled-coil region spans residues 1000 to 1048; the sequence is DEEAKREAARLQKQLEDAQRQLDEAKRAADEANQKLAAAKEEAKSAAAS. 3 consecutive Carrier domains span residues 1114-1193, 1232-1308, and 1342-1418; these read ALLA…KAEI, ERAE…KAEI, and AKAE…KAEI. O-(pantetheine 4'-phosphoryl)serine is present on residues Ser-1152, Ser-1267, and Ser-1377. The segment at 1422–1442 is disordered; that stretch reads SAPAPAAAAPAPAAPAPAAAA. Low complexity predominate over residues 1423–1442; that stretch reads APAPAAAAPAPAAPAPAAAA. One can recognise a Carrier 4 domain in the interval 1455–1531; sequence AKAETVVMEV…EVVDAMKAEI (77 aa). Ser-1490 bears the O-(pantetheine 4'-phosphoryl)serine mark. A disordered region spans residues 1535-1555; it reads SAPAPAAAAPAPAAPAPAAAA. The span at 1536 to 1555 shows a compositional bias: low complexity; sequence APAPAAAAPAPAAPAPAAAA. 4 Carrier domains span residues 1568–1644, 1681–1757, 1792–1868, and 1903–1979; these read AKAE…KAEI. Ser-1603, Ser-1716, Ser-1827, and Ser-1938 each carry O-(pantetheine 4'-phosphoryl)serine. Positions 2257–2484 constitute a Ketoreductase (KR) domain; sequence VVSGGARGIT…VKSICFGPWD (228 aa). The N-terminal hotdog fold stretch occupies residues 2524–2651; it reads EILVGNWRTP…RAVVVLSSQG (128 aa). The PKS/mFAS DH domain maps to 2524 to 2812; the sequence is EILVGNWRTP…SVIATDSLAF (289 aa). A dehydratase (DH) domain region spans residues 2540-2800; sequence ETITLHRKIS…NEQGDLFIDV (261 aa). The Proton acceptor; for dehydratase activity role is filled by His-2559. The interval 2666-2812 is C-terminal hotdog fold; it reads ADPAAQSAVY…SVIATDSLAF (147 aa). Asp-2730 acts as the Proton donor; for dehydratase activity in catalysis.

As to quaternary structure, component of the polyunsaturated fatty acid synthase complex composed of at least ORF-A, ORF-B and ORF-C. The cofactor is pantetheine 4'-phosphate.

Its pathway is lipid metabolism; fatty acid biosynthesis. Its function is as follows. Poliketide synthase-like protein; part of the polyunsaturated fatty acid synthase composed of the 3 PKS-like subunits A, B and C. While the saturated fatty acids (SFAs) in Thraustochytrium are produced by the conventional fatty acid synthase (FAS) pathway, polyunsaturated fatty acids (PUFAs) including docosahexeanoic acid (DHA) and docosapentaenoic acid (DPA) are synthesized via an anaerobical PKS pathway. PUFA synthase assimilates fatty acyl-CoA, the product of FAS, as the starter unit to synthesize DPA, and this starter unit may be butyryl-CoA, hexanoyl-CoA, or octanoyl-CoA. DPA and DHA biosynthesis seem to differ by the reduction at the N-3 position by PUFA synthase, not the extension of carbon chain. In DHA biosynthesis, PUFA synthase extends the fatty acyl chain from the methyl toward the carboxyl end, and the double bond is formed when the carbon chain is growing, instead of afterward. Therefore, PUFA synthase is unable to transform DPA to DHA, suggesting that DPA is not the precursor of DHA. Moreover, DPA molecule is partly extended by FAS KS domain, so DPA biosynthesis is less dependent on PUFA synthase KS domain than DHA. This is Polyunsaturated fatty acid synthase subunit A from Thraustochytrium sp. (strain ATCC 26185 / S-3).